The primary structure comprises 682 residues: MPEDGGPFGSEAAEASGAMSETENEYDDHEPHHKDEDDRMSEQNTTPDGVDAGGEVKKKYDPKDPLRPRRKKARRACYACQRAHLTCGDERPCQRCIKRGLQDSCQDGVRKKAKYLHDAPPEALRPVLGPNYNPNAPSSRHGGQRHHSVSTDASTVRTFFSHSNASQYPVYSSTQSIPHGLTESLPFNSQQSPVSPTFQQTSSNPPISGMVAPPVSSPMTPFGLPFDPSDPNIFNFNIDGLNFGSHYGAMEFGMLGHMSSSAADTPPQESGMGQQPGDVHFGAGLFGSHFDNRMLPEFLGLDAGANGIYSQGNLQHGLPHAYAIPAGPTSLQSPSTENNSPQPTTFGFDDRPSPTMSQYPNAPGAKSSSNSRPSKLRKLDKVAILQKRQRDPSYIYDTVKKSFDYVGSFHKLFEVLSSRFSQPHAARIAKSLAAIRPALLASTRNLTTQDLIFMEQCFQRTLFEYEDFMTQSSSPTLACRRTGEIAGVNKEFTALTGWTKDVLLGKEPNRNTNLGGTGVRTTPRLKSLNESSAENGGAASGPRPVFLAELMDHESAVEFYEDYSQLAFGDSRGRMTRKCRLLKYRTDKPAAGGGGGAGEEERKPDPSAAPRQQEKDSRHSILSNRVAKIDGEHGISKLERDGKLECSYTWTIKRDMFDMPMLFVINVRFFFFFDDYYGRRHC.

The disordered stretch occupies residues 1 to 72; the sequence is MPEDGGPFGS…KDPLRPRRKK (72 aa). Positions 9-21 are enriched in low complexity; it reads GSEAAEASGAMSE. Composition is skewed to basic and acidic residues over residues 29-41 and 54-67; these read HEPH…DRMS and GEVK…DPLR. The zn(2)-C6 fungal-type DNA-binding region spans 77 to 105; it reads CYACQRAHLTCGDERPCQRCIKRGLQDSC. Disordered regions lie at residues 122–148, 181–211, 325–375, 509–541, and 586–622; these read EALR…RHHS, LTES…SGMV, PAGP…RPSK, NRNT…AASG, and TDKP…HSIL. 3 stretches are compositionally biased toward polar residues: residues 185–206, 329–345, and 354–373; these read LPFN…SNPP, TSLQ…QPTT, and PTMS…NSRP.

It belongs to the ERT1/acuK family.

Its subcellular location is the nucleus. Its function is as follows. Transcription factor which regulates nonfermentable carbon utilization. Activator of gluconeogenetic genes. This chain is Transcription activator of gluconeogenesis PODANS_4_8760, found in Podospora anserina (strain S / ATCC MYA-4624 / DSM 980 / FGSC 10383) (Pleurage anserina).